The following is a 311-amino-acid chain: Putative ABC transporter ATP-binding protein MG467 (311 aa).

Residues 84–310 (ITINKMWKNV…IVSNQLVRPL (227 aa)) form the ABC transporter domain. 122-129 (GSSGSGKT) is a binding site for ATP.

The protein belongs to the ABC transporter superfamily.

The protein is Putative ABC transporter ATP-binding protein MG467 of Mycoplasma genitalium (strain ATCC 33530 / DSM 19775 / NCTC 10195 / G37) (Mycoplasmoides genitalium).